The following is a 316-amino-acid chain: Nucleotide-binding protein NFA_35930 (316 aa).

Position 32 to 39 (32 to 39 (GLSGAGRG)) interacts with ATP. GTP is bound at residue 83-86 (DVRS).

This sequence belongs to the RapZ-like family.

Displays ATPase and GTPase activities. The chain is Nucleotide-binding protein NFA_35930 from Nocardia farcinica (strain IFM 10152).